The sequence spans 89 residues: Large ribosomal subunit protein bL27 (89 aa).

Residues 1–20 (MAHKKAGGSSRNGRDSAGQR) form a disordered region.

It belongs to the bacterial ribosomal protein bL27 family.

In Paramagnetospirillum magneticum (strain ATCC 700264 / AMB-1) (Magnetospirillum magneticum), this protein is Large ribosomal subunit protein bL27.